The chain runs to 465 residues: Sensor histidine kinase ZraS (465 aa).

At 1-14 (MRFMQRSKDSLAKW) the chain is on the cytoplasmic side. Residues 15 to 35 (LSAILPVVIVGLVGLFAVTVI) traverse the membrane as a helical segment. Residues 36 to 201 (RDYGRASEAD…ATQSGEKRNT (166 aa)) are Periplasmic-facing. The helical transmembrane segment at 202-222 (LIILFALATVLLASVLSFFWY) threads the bilayer. The Cytoplasmic segment spans residues 223 to 465 (RRYLRSRQLL…VNITRKDPQG (243 aa)). Residues 251–458 (GVAHEIRNPL…TFTLWLPVNI (208 aa)) enclose the Histidine kinase domain. The residue at position 254 (H254) is a Phosphohistidine; by autocatalysis.

In terms of processing, autophosphorylated.

The protein localises to the cell inner membrane. The catalysed reaction is ATP + protein L-histidine = ADP + protein N-phospho-L-histidine.. Its activity is regulated as follows. Activity of the ZraS/ZraR two-component system is repressed by the zinc-bound form of ZraP, which probably interacts with the periplasmic region of ZraS. Part of the Zra signaling pathway, an envelope stress response (ESR) system composed of the periplasmic accessory protein ZraP, the histidine kinase ZraS and the transcriptional regulator ZraR. The ZraPSR system contributes to antibiotic resistance and is important for membrane integrity in the presence of membrane-targeting biocides. ZraS is a member of the two-component regulatory system ZraS/ZraR. Functions as a membrane-associated sensor kinase that phosphorylates ZraR in response to high concentrations of Zn(2+) or Pb(2+) in the medium. Binds one zinc molecule with high affinity via its periplasmic domain, inducing a conformational change that is transmitted to the histidine kinase domain and leads to the activation of ZraR. The system has no direct role in zinc or copper resistance. In Escherichia coli (strain K12), this protein is Sensor histidine kinase ZraS.